A 315-amino-acid polypeptide reads, in one-letter code: Microtubule-associated protein Jupiter (315 aa).

Residues 1-14 show a composition bias toward polar residues; that stretch reads MISNFDCTDNQASS. Disordered stretches follow at residues 1-37 and 51-89; these read MISN…QTPR and EKDN…PGKN. Position 24 is a phosphoserine (Ser24). Thr35 bears the Phosphothreonine mark. The segment covering 62–76 has biased composition (basic and acidic residues); the sequence is APRRGQKTVDSHSRL. Phosphothreonine occurs at positions 81 and 85. Residues Ser94, Ser122, and Ser133 each carry the phosphoserine modification. Disordered stretches follow at residues 116 to 166 and 272 to 315; these read YNGK…ADDA and EGNP…SGLW. Residues 120 to 133 are compositionally biased toward low complexity; that stretch reads SGSVSSASSSVSSS. 2 stretches are compositionally biased toward polar residues: residues 134 to 148 and 285 to 296; these read TENL…SVFR and DFTQRQESSNGG.

It belongs to the MAP Jupiter family.

Its subcellular location is the nucleus. It localises to the cytoplasm. It is found in the cytoskeleton. The protein localises to the spindle. Its function is as follows. Binds to all microtubule populations. This Drosophila sechellia (Fruit fly) protein is Microtubule-associated protein Jupiter.